A 332-amino-acid chain; its full sequence is Probable farnesyl diphosphate synthase (332 aa).

Residues lysine 75, arginine 78, and histidine 107 each coordinate isopentenyl diphosphate. 2 residues coordinate Mg(2+): aspartate 114 and aspartate 120. Position 125 (arginine 125) interacts with (2E)-geranyl diphosphate. Arginine 126 is a binding site for isopentenyl diphosphate. (2E)-geranyl diphosphate contacts are provided by lysine 208, glutamine 250, and lysine 267.

It belongs to the FPP/GGPP synthase family. It depends on Mg(2+) as a cofactor.

It is found in the cytoplasm. The enzyme catalyses isopentenyl diphosphate + (2E)-geranyl diphosphate = (2E,6E)-farnesyl diphosphate + diphosphate. This chain is Probable farnesyl diphosphate synthase, found in Sinorhizobium fredii (strain NBRC 101917 / NGR234).